The primary structure comprises 65 residues: Disintegrin CC8B (65 aa).

Residues 1-65 (NSAHPCCDPV…DCPRNPWHKS (65 aa)) enclose the Disintegrin domain. Disulfide bonds link Cys-6–Cys-29, Cys-20–Cys-26, Cys-25–Cys-50, and Cys-38–Cys-57. Residues 42–44 (WGD) carry the Cell attachment site; atypical (WGD) motif.

Belongs to the disintegrin family. Dimeric disintegrin subfamily. As to quaternary structure, heterodimer with CC8A; disulfide-linked. Expressed by the venom gland.

The protein localises to the secreted. In terms of biological role, inhibits integrins alpha-IIb/beta-3 (ITGA2B/ITGB3), alpha-V/beta-3 (ITGAV/ITGB3), and alpha-5/beta-1 (ITGA5/ITGB1). This is Disintegrin CC8B from Cerastes cerastes (Horned desert viper).